The sequence spans 347 residues: tRNA N6-adenosine threonylcarbamoyltransferase (347 aa).

Fe cation is bound by residues histidine 115 and histidine 119. Substrate is bound by residues 137–141 (LASGG), aspartate 170, glycine 183, and asparagine 281. Aspartate 309 contributes to the Fe cation binding site.

This sequence belongs to the KAE1 / TsaD family. Fe(2+) is required as a cofactor.

The protein resides in the cytoplasm. The enzyme catalyses L-threonylcarbamoyladenylate + adenosine(37) in tRNA = N(6)-L-threonylcarbamoyladenosine(37) in tRNA + AMP + H(+). Its function is as follows. Required for the formation of a threonylcarbamoyl group on adenosine at position 37 (t(6)A37) in tRNAs that read codons beginning with adenine. Is involved in the transfer of the threonylcarbamoyl moiety of threonylcarbamoyl-AMP (TC-AMP) to the N6 group of A37, together with TsaE and TsaB. TsaD likely plays a direct catalytic role in this reaction. This is tRNA N6-adenosine threonylcarbamoyltransferase from Methylorubrum populi (strain ATCC BAA-705 / NCIMB 13946 / BJ001) (Methylobacterium populi).